We begin with the raw amino-acid sequence, 281 residues long: Stomatin-4 (281 aa).

Residues 28-48 form a helical membrane-spanning segment; it reads WIITIISYLVVLFTLPLSAFF.

The protein belongs to the band 7/mec-2 family.

The protein resides in the membrane. The polypeptide is Stomatin-4 (sto-4) (Caenorhabditis elegans).